The primary structure comprises 200 residues: FMN-dependent NADH:quinone oxidoreductase (200 aa).

FMN-binding positions include Ser10, 96–99 (MYNF), and 140–143 (SRGG).

It belongs to the azoreductase type 1 family. Homodimer. FMN serves as cofactor.

It carries out the reaction 2 a quinone + NADH + H(+) = 2 a 1,4-benzosemiquinone + NAD(+). It catalyses the reaction N,N-dimethyl-1,4-phenylenediamine + anthranilate + 2 NAD(+) = 2-(4-dimethylaminophenyl)diazenylbenzoate + 2 NADH + 2 H(+). Functionally, quinone reductase that provides resistance to thiol-specific stress caused by electrophilic quinones. Its function is as follows. Also exhibits azoreductase activity. Catalyzes the reductive cleavage of the azo bond in aromatic azo compounds to the corresponding amines. This is FMN-dependent NADH:quinone oxidoreductase from Photorhabdus laumondii subsp. laumondii (strain DSM 15139 / CIP 105565 / TT01) (Photorhabdus luminescens subsp. laumondii).